A 452-amino-acid polypeptide reads, in one-letter code: Probable mannose-6-phosphate isomerase (452 aa).

Zn(2+) contacts are provided by glutamine 141, histidine 143, glutamate 168, and histidine 295. The active site involves arginine 314.

This sequence belongs to the mannose-6-phosphate isomerase type 1 family. The cofactor is Zn(2+).

The protein localises to the cytoplasm. The enzyme catalyses D-mannose 6-phosphate = D-fructose 6-phosphate. It functions in the pathway nucleotide-sugar biosynthesis; GDP-alpha-D-mannose biosynthesis; alpha-D-mannose 1-phosphate from D-fructose 6-phosphate: step 1/2. Functionally, involved in the synthesis of the GDP-mannose and dolichol-phosphate-mannose required for a number of critical mannosyl transfer reactions. The protein is Probable mannose-6-phosphate isomerase (mpi) of Dictyostelium discoideum (Social amoeba).